A 127-amino-acid chain; its full sequence is Small ribosomal subunit protein uS13 (127 aa).

Residues leucine 96–valine 118 are compositionally biased toward basic residues. The interval leucine 96–arginine 127 is disordered.

It belongs to the universal ribosomal protein uS13 family. As to quaternary structure, part of the 30S ribosomal subunit. Forms a loose heterodimer with protein S19. Forms two bridges to the 50S subunit in the 70S ribosome.

Located at the top of the head of the 30S subunit, it contacts several helices of the 16S rRNA. In the 70S ribosome it contacts the 23S rRNA (bridge B1a) and protein L5 of the 50S subunit (bridge B1b), connecting the 2 subunits; these bridges are implicated in subunit movement. Contacts the tRNAs in the A and P-sites. This is Small ribosomal subunit protein uS13 from Myxococcus xanthus (strain DK1622).